A 232-amino-acid chain; its full sequence is MPPLRWQACLFITINAVALSMLLFDAPVGASERPAAVKELGELLTGFGDSAWLICISILLFFQGKAGYKLLKTARSKAQALYVSWIGAYLFTTVVFSGLLANLLKRAIGRARPDHFHDYGMFSFTPFSGHAAFESFPSGHSTTVGAFFAAFALLFPRYRVAFIACAIWLGMTRVMVGAHYPSDVIAGLAFGGWFSLLTAIVYARCGLLFKLAPDGWPLAKRLFPDIEKPGAL.

6 consecutive transmembrane segments (helical) span residues 10 to 30 (LFITINAVALSMLLFDAPVGA), 42 to 62 (ELLTGFGDSAWLICISILLFF), 80 to 100 (ALYVSWIGAYLFTTVVFSGLL), 136 to 156 (FPSGHSTTVGAFFAAFALLFP), 160 to 180 (VAFIACAIWLGMTRVMVGAHY), and 183 to 203 (DVIAGLAFGGWFSLLTAIVYA).

The protein belongs to the lipid A LpxE 1-phosphatase family.

Its subcellular location is the cell inner membrane. Its pathway is bacterial outer membrane biogenesis; LPS lipid A biosynthesis. Probably removes the 1-phosphate moiety from lipid A species. Does not seem to act on other membrane components, nor does it dephosphorylate the 4'-phosphate group of lipid A and/or lipid A precursors. This chain is Lipid A 1-phosphatase, found in Rhizobium etli (strain ATCC 51251 / DSM 11541 / JCM 21823 / NBRC 15573 / CFN 42).